Here is a 305-residue protein sequence, read N- to C-terminus: Glutaminase (305 aa).

Ser61, Asn113, Glu158, Asn165, Tyr189, Tyr241, and Val259 together coordinate substrate.

The protein belongs to the glutaminase family. Homotetramer.

It catalyses the reaction L-glutamine + H2O = L-glutamate + NH4(+). The protein is Glutaminase of Alkaliphilus metalliredigens (strain QYMF).